A 331-amino-acid polypeptide reads, in one-letter code: 7,8-didemethyl-8-hydroxy-5-deazariboflavin synthase (331 aa).

The Radical SAM core domain occupies 6–244 (ITFSKNAFLP…ADVAVQIPPN (239 aa)). [4Fe-4S] cluster contacts are provided by Cys20, Cys24, and Cys27.

This sequence belongs to the radical SAM superfamily. CofG family. Consists of two subunits, CofG and CofH. [4Fe-4S] cluster serves as cofactor.

The catalysed reaction is 5-amino-5-(4-hydroxybenzyl)-6-(D-ribitylimino)-5,6-dihydrouracil + S-adenosyl-L-methionine = 7,8-didemethyl-8-hydroxy-5-deazariboflavin + 5'-deoxyadenosine + L-methionine + NH4(+) + H(+). It participates in cofactor biosynthesis; coenzyme F0 biosynthesis. Functionally, catalyzes the radical-mediated synthesis of 7,8-didemethyl-8-hydroxy-5-deazariboflavin from 5-amino-5-(4-hydroxybenzyl)-6-(D-ribitylimino)-5,6-dihydrouracil. The polypeptide is 7,8-didemethyl-8-hydroxy-5-deazariboflavin synthase (Methanoculleus marisnigri (strain ATCC 35101 / DSM 1498 / JR1)).